A 394-amino-acid polypeptide reads, in one-letter code: Elongation factor Tu (394 aa).

The region spanning 10-204 (KPHINVGTIG…YLDTYIPEPK (195 aa)) is the tr-type G domain. The G1 stretch occupies residues 19–26 (GHVDHGKT). 19–26 (GHVDHGKT) provides a ligand contact to GTP. Thr-26 is a binding site for Mg(2+). Residues 60-64 (GITIN) form a G2 region. A G3 region spans residues 81–84 (DCPG). Residues 81–85 (DCPGH) and 136–139 (NKCD) contribute to the GTP site. A G4 region spans residues 136 to 139 (NKCD). The G5 stretch occupies residues 174 to 176 (SAL).

The protein belongs to the TRAFAC class translation factor GTPase superfamily. Classic translation factor GTPase family. EF-Tu/EF-1A subfamily. Monomer.

Its subcellular location is the cytoplasm. The catalysed reaction is GTP + H2O = GDP + phosphate + H(+). Functionally, GTP hydrolase that promotes the GTP-dependent binding of aminoacyl-tRNA to the A-site of ribosomes during protein biosynthesis. The sequence is that of Elongation factor Tu from Buchnera aphidicola subsp. Baizongia pistaciae (strain Bp).